The primary structure comprises 211 residues: Protein Nef (211 aa).

The tract at residues 1-38 (MGNAWSKSKFAGWSEVRDRMRRSSSDPQQPCAPGVGAV) is disordered. Gly2 carries N-myristoyl glycine; by host lipidation. Ser6 is subject to Phosphoserine; by host. The span at 15–24 (EVRDRMRRSS) shows a compositional bias: basic and acidic residues. An acidic; interacts with host PACS1 and PACS2; stabilizes the interaction of NEF/MHC-I with host AP1M1; necessary for MHC-I internalization region spans residues 67-70 (KDED). The segment at 74–83 (PVRPQVPLRP) is SH3-binding; interaction with Src family tyrosine kinases. A PxxP; stabilizes the interaction of NEF/MHC-I with host AP1M1; necessary for MHC-I internalization motif is present at residues 77-80 (PQVP). Positions 113 to 129 (EILDLWIYHTQGFFPDW) are mediates dimerization, Nef-PTE1 interaction. A binding to ATP6V1H region spans residues 153 to 186 (VSAEEAERLGNTNEDASLLHPACNHGAEDAHGEI). Residues 170 to 171 (LL) carry the Dileucine internalization motif; necessary for CD4 internalization motif. Residues 180–181 (ED) carry the Diacidic; necessary for CD4 internalization motif.

It belongs to the lentivirus primate group Nef protein family. In terms of assembly, monomer; cytosolic form. Homodimer; membrane bound form. Interacts with Nef associated p21-activated kinase (PAK2); this interaction activates PAK2. Associates with the Nef-MHC-I-AP1 complex; this complex is required for MHC-I internalization. Interacts (via C-terminus) with host PI3-kinase. Interacts with host PACS1; this interaction seems to be weak. Interacts with host PACS2. Interacts with host LCK and MAPK3; these interactions inhibit the kinase activity of the latter. Interacts with host ATP6V1H; this interaction may play a role in CD4 endocytosis. Associates with the CD4-Nef-AP2 complex; this complex is required for CD4 internalization. Interacts with host AP2 subunit alpha and AP2 subunit sigma2. Interacts with TCR-zeta chain; this interaction up-regulates the Fas ligand (FasL) surface expression. Interacts with host HCK, LYN, and SRC; these interactions activate the Src family kinases. Interacts with MAP3K5; this interaction inhibits the Fas and TNFR-mediated death signals. Interacts with beta-COP and PTE1. Interacts with human RACK1; this increases Nef phosphorylation by PKC. Interacts with TP53; this interaction decreases the half-life of TP53, protecting the infected cell against p53-mediated apoptosis. Post-translationally, the virion-associated Nef proteins are cleaved by the viral protease to release the soluble C-terminal core protein. Nef is probably cleaved concomitantly with viral structural proteins on maturation of virus particles. In terms of processing, myristoylated. Phosphorylated on serine residues, probably by host PKCdelta and theta.

The protein localises to the host cell membrane. Its subcellular location is the virion. The protein resides in the secreted. It localises to the host Golgi apparatus membrane. Factor of infectivity and pathogenicity, required for optimal virus replication. Alters numerous pathways of T-lymphocyte function and down-regulates immunity surface molecules in order to evade host defense and increase viral infectivity. Alters the functionality of other immunity cells, like dendritic cells, monocytes/macrophages and NK cells. In terms of biological role, in infected CD4(+) T-lymphocytes, down-regulates the surface MHC-I, mature MHC-II, CD4, CD28, CCR5 and CXCR4 molecules. Mediates internalization and degradation of host CD4 through the interaction of with the cytoplasmic tail of CD4, the recruitment of AP-2 (clathrin adapter protein complex 2), internalization through clathrin coated pits, and subsequent transport to endosomes and lysosomes for degradation. Diverts host MHC-I molecules to the trans-Golgi network-associated endosomal compartments by an endocytic pathway to finally target them for degradation. MHC-I down-regulation may involve AP-1 (clathrin adapter protein complex 1) or possibly Src family kinase-ZAP70/Syk-PI3K cascade recruited by PACS2. In consequence infected cells are masked for immune recognition by cytotoxic T-lymphocytes. Decreasing the number of immune receptors also prevents reinfection by more HIV particles (superinfection). Down-regulates host SERINC3 and SERINC5 thereby excluding these proteins from the viral particles. Virion infectivity is drastically higher when SERINC3 or SERINC5 are excluded from the viral envelope, because these host antiviral proteins impair the membrane fusion event necessary for subsequent virion penetration. Functionally, bypasses host T-cell signaling by inducing a transcriptional program nearly identical to that of anti-CD3 cell activation. Interaction with TCR-zeta chain up-regulates the Fas ligand (FasL). Increasing surface FasL molecules and decreasing surface MHC-I molecules on infected CD4(+) cells send attacking cytotoxic CD8+ T-lymphocytes into apoptosis. Its function is as follows. Plays a role in optimizing the host cell environment for viral replication without causing cell death by apoptosis. Protects the infected cells from apoptosis in order to keep them alive until the next virus generation is ready to strike. Inhibits the Fas and TNFR-mediated death signals by blocking MAP3K5/ASK1. Decreases the half-life of TP53, protecting the infected cell against p53-mediated apoptosis. Inhibits the apoptotic signals regulated by the Bcl-2 family proteins through the formation of a Nef/PI3-kinase/PAK2 complex that leads to activation of PAK2 and induces phosphorylation of host BAD. Extracellular Nef protein targets CD4(+) T-lymphocytes for apoptosis by interacting with CXCR4 surface receptors. The chain is Protein Nef from Human immunodeficiency virus type 1 group O (isolate MVP5180) (HIV-1).